Consider the following 309-residue polypeptide: uncharacterized protein (309 aa).

This is an uncharacterized protein from Bacillus subtilis (strain 168).